The sequence spans 278 residues: Betaine--homocysteine S-methyltransferase 1 (278 aa).

Residues 11–278 form the Hcy-binding domain; sequence KGILERLNSG…FGLEPRVATR (268 aa). N6-succinyllysine is present on residues K40, K93, and K98. C217 provides a ligand contact to Zn(2+). 2 positions are modified to N6-succinyllysine: K232 and K241.

Homotetramer. Requires Zn(2+) as cofactor. Found exclusively in liver and kidney.

It localises to the cytoplasm. It is found in the cytosol. Its subcellular location is the nucleus. It catalyses the reaction L-homocysteine + glycine betaine = N,N-dimethylglycine + L-methionine. Its pathway is amine and polyamine degradation; betaine degradation; sarcosine from betaine: step 1/2. It participates in amino-acid biosynthesis; L-methionine biosynthesis via de novo pathway; L-methionine from L-homocysteine (BhmT route): step 1/1. With respect to regulation, inhibited by dimethylglycine and methylthioacetate. Its function is as follows. Involved in the regulation of homocysteine metabolism. Converts betaine and homocysteine to dimethylglycine and methionine, respectively. This reaction is also required for the irreversible oxidation of choline. This is Betaine--homocysteine S-methyltransferase 1 from Sus scrofa (Pig).